Here is a 459-residue protein sequence, read N- to C-terminus: Probable multidrug resistance protein NorM (459 aa).

Helical transmembrane passes span 20–40 (LTTL…IGFV), 53–73 (LAAV…FMGI), 100–120 (GIWF…AAIT), 132–152 (VEGT…AAMV), 168–188 (LIML…YIFV), 202–222 (CGLA…IYIA), 254–274 (IGLS…LIAP), 286–306 (GISL…AGTV), 325–345 (GVSL…LVLF), 358–378 (AVLS…PADF), 395–415 (VPMF…GYLL), and 423–443 (IYGF…ALVW).

The protein belongs to the multi antimicrobial extrusion (MATE) (TC 2.A.66.1) family.

It localises to the cell inner membrane. Functionally, multidrug efflux pump. This chain is Probable multidrug resistance protein NorM (norM), found in Neisseria meningitidis serogroup B (strain ATCC BAA-335 / MC58).